Reading from the N-terminus, the 471-residue chain is Probable ribonuclease FAU-1 (471 aa).

Belongs to the FAU-1 family.

In terms of biological role, probable RNase involved in rRNA stability through maturation and/or degradation of precursor rRNAs. Binds to RNA in loop regions with AU-rich sequences. This chain is Probable ribonuclease FAU-1, found in Caldivirga maquilingensis (strain ATCC 700844 / DSM 13496 / JCM 10307 / IC-167).